Reading from the N-terminus, the 130-residue chain is Small ribosomal subunit protein uS8 (130 aa).

This sequence belongs to the universal ribosomal protein uS8 family. Part of the 30S ribosomal subunit.

In terms of biological role, one of the primary rRNA binding proteins, it binds directly to 16S rRNA central domain where it helps coordinate assembly of the platform of the 30S subunit. This chain is Small ribosomal subunit protein uS8, found in Methanococcus vannielii (strain ATCC 35089 / DSM 1224 / JCM 13029 / OCM 148 / SB).